The following is a 250-amino-acid chain: Ubiquinone/menaquinone biosynthesis C-methyltransferase UbiE (250 aa).

Residues Thr73, Asp94, 122 to 123 (NA), and Ser139 each bind S-adenosyl-L-methionine.

It belongs to the class I-like SAM-binding methyltransferase superfamily. MenG/UbiE family.

The catalysed reaction is a 2-demethylmenaquinol + S-adenosyl-L-methionine = a menaquinol + S-adenosyl-L-homocysteine + H(+). It carries out the reaction a 2-methoxy-6-(all-trans-polyprenyl)benzene-1,4-diol + S-adenosyl-L-methionine = a 5-methoxy-2-methyl-3-(all-trans-polyprenyl)benzene-1,4-diol + S-adenosyl-L-homocysteine + H(+). The protein operates within quinol/quinone metabolism; menaquinone biosynthesis; menaquinol from 1,4-dihydroxy-2-naphthoate: step 2/2. Its pathway is cofactor biosynthesis; ubiquinone biosynthesis. In terms of biological role, methyltransferase required for the conversion of demethylmenaquinol (DMKH2) to menaquinol (MKH2) and the conversion of 2-polyprenyl-6-methoxy-1,4-benzoquinol (DDMQH2) to 2-polyprenyl-3-methyl-6-methoxy-1,4-benzoquinol (DMQH2). This Francisella tularensis subsp. holarctica (strain FTNF002-00 / FTA) protein is Ubiquinone/menaquinone biosynthesis C-methyltransferase UbiE.